A 181-amino-acid chain; its full sequence is Adenylate kinase (181 aa).

Position 10 to 15 (10 to 15 (GAGKGT)) interacts with ATP. Residues 30–59 (STGDLFRANIGEGTPLGKEAKSYIDAGKLV) are NMP. Residues threonine 31, arginine 36, 57–59 (KLV), 85–88 (GFPR), and glutamine 92 contribute to the AMP site. The tract at residues 126–132 (ARGRADD) is LID. Arginine 127 is a binding site for ATP. AMP is bound by residues arginine 129 and arginine 140. Glycine 166 is a binding site for ATP.

This sequence belongs to the adenylate kinase family. As to quaternary structure, monomer.

Its subcellular location is the cytoplasm. It carries out the reaction AMP + ATP = 2 ADP. It functions in the pathway purine metabolism; AMP biosynthesis via salvage pathway; AMP from ADP: step 1/1. Functionally, catalyzes the reversible transfer of the terminal phosphate group between ATP and AMP. Plays an important role in cellular energy homeostasis and in adenine nucleotide metabolism. The chain is Adenylate kinase from Corynebacterium diphtheriae (strain ATCC 700971 / NCTC 13129 / Biotype gravis).